The following is a 292-amino-acid chain: NAD kinase (292 aa).

The active-site Proton acceptor is the aspartate 73. Residues 73-74 (DG), 147-148 (NE), histidine 158, arginine 175, aspartate 177, 188-193 (TAYSLS), and glutamine 247 each bind NAD(+).

This sequence belongs to the NAD kinase family. A divalent metal cation serves as cofactor.

Its subcellular location is the cytoplasm. The catalysed reaction is NAD(+) + ATP = ADP + NADP(+) + H(+). In terms of biological role, involved in the regulation of the intracellular balance of NAD and NADP, and is a key enzyme in the biosynthesis of NADP. Catalyzes specifically the phosphorylation on 2'-hydroxyl of the adenosine moiety of NAD to yield NADP. This is NAD kinase from Escherichia coli (strain UTI89 / UPEC).